Here is a 214-residue protein sequence, read N- to C-terminus: ATP phosphoribosyltransferase (214 aa).

This sequence belongs to the ATP phosphoribosyltransferase family. Short subfamily. Heteromultimer composed of HisG and HisZ subunits.

It is found in the cytoplasm. It carries out the reaction 1-(5-phospho-beta-D-ribosyl)-ATP + diphosphate = 5-phospho-alpha-D-ribose 1-diphosphate + ATP. The protein operates within amino-acid biosynthesis; L-histidine biosynthesis; L-histidine from 5-phospho-alpha-D-ribose 1-diphosphate: step 1/9. Functionally, catalyzes the condensation of ATP and 5-phosphoribose 1-diphosphate to form N'-(5'-phosphoribosyl)-ATP (PR-ATP). Has a crucial role in the pathway because the rate of histidine biosynthesis seems to be controlled primarily by regulation of HisG enzymatic activity. The protein is ATP phosphoribosyltransferase of Methylibium petroleiphilum (strain ATCC BAA-1232 / LMG 22953 / PM1).